Consider the following 305-residue polypeptide: Carbamate kinase (305 aa).

The protein belongs to the carbamate kinase family.

It localises to the cytoplasm. It catalyses the reaction hydrogencarbonate + NH4(+) + ATP = carbamoyl phosphate + ADP + H2O + H(+). It participates in metabolic intermediate metabolism; carbamoyl phosphate degradation; CO(2) and NH(3) from carbamoyl phosphate: step 1/1. The protein is Carbamate kinase (arcC) of Thermoplasma acidophilum (strain ATCC 25905 / DSM 1728 / JCM 9062 / NBRC 15155 / AMRC-C165).